Reading from the N-terminus, the 84-residue chain is RNA-binding protein Hfq (84 aa).

The Sm domain occupies 9–68 (DPYLNTLRKERVPVSIYLVNGIKLQGQIESFDQFVILLKNTVSQMVYKHAISTVVPSRPV).

It belongs to the Hfq family. Homohexamer.

Functionally, RNA chaperone that binds small regulatory RNA (sRNAs) and mRNAs to facilitate mRNA translational regulation in response to envelope stress, environmental stress and changes in metabolite concentrations. Also binds with high specificity to tRNAs. The chain is RNA-binding protein Hfq from Azotobacter vinelandii (strain DJ / ATCC BAA-1303).